Here is a 165-residue protein sequence, read N- to C-terminus: Large ribosomal subunit protein uL10 (165 aa).

This sequence belongs to the universal ribosomal protein uL10 family. Part of the ribosomal stalk of the 50S ribosomal subunit. The N-terminus interacts with L11 and the large rRNA to form the base of the stalk. The C-terminus forms an elongated spine to which L12 dimers bind in a sequential fashion forming a multimeric L10(L12)X complex.

Functionally, forms part of the ribosomal stalk, playing a central role in the interaction of the ribosome with GTP-bound translation factors. The protein is Large ribosomal subunit protein uL10 of Deinococcus deserti (strain DSM 17065 / CIP 109153 / LMG 22923 / VCD115).